Here is a 244-residue protein sequence, read N- to C-terminus: Myrosinase MB1 (244 aa).

The N-linked (GlcNAc...) asparagine glycan is linked to asparagine 32. Tyrosine 51 contributes to the substrate binding site. Residue glutamate 125 is the Nucleophile of the active site. Substrate-binding positions include tryptophan 173 and 180–181; that span reads EF. An N-linked (GlcNAc...) asparagine glycan is attached at asparagine 216.

It belongs to the glycosyl hydrolase 1 family. As to quaternary structure, homodimer. As to expression, in vacuoles called myrosin grains of a certain class of cells, myrosin cells, distributed in the cotyledons and the axis of the embryo as well as in different organs of the growing plant.

The protein localises to the vacuole. The catalysed reaction is a thioglucoside + H2O = a sugar + a thiol.. Its function is as follows. Degradation of glucosinolates (glucose residue linked by a thioglucoside bound to an amino acid derivative) to glucose, sulfate and any of the products: thiocyanates, isothiocyanates, nitriles, epithionitriles or oxazolidine-2-thiones. In Sinapis alba (White mustard), this protein is Myrosinase MB1.